Here is a 228-residue protein sequence, read N- to C-terminus: Histidine/lysine/arginine/ornithine transport system permease protein HisQ (228 aa).

Residues Met1–Gly12 lie on the Periplasmic side of the membrane. The helical transmembrane segment at Ala13–Ile33 threads the bilayer. The ABC transmembrane type-1 domain occupies Ala13–Leu212. Over Gly34 to Gly58 the chain is Cytoplasmic. The chain crosses the membrane as a helical span at residues Val59–Val79. At Thr80–Gln87 the chain is on the periplasmic side. Residues Ile88–Phe108 form a helical membrane-spanning segment. Residues Thr109–Arg148 are Cytoplasmic-facing. Residues Tyr149–Leu171 traverse the membrane as a helical segment. At Gly172 to Ala194 the chain is on the periplasmic side. Residues Ile195–Leu215 traverse the membrane as a helical segment. Over Glu216–Leu228 the chain is Cytoplasmic.

It belongs to the binding-protein-dependent transport system permease family. HisMQ subfamily. In terms of assembly, the HisPMQJ complex is composed of two ATP-binding proteins (HisP), two transmembrane proteins (HisM and HisQ) and a solute-binding protein (HisJ). The HisPMQ-ArgT complex is composed of two ATP-binding proteins (HisP), two transmembrane proteins (HisM and HisQ) and a solute-binding protein (ArgT).

The protein resides in the cell inner membrane. Functionally, part of the ABC transporter complex HisPMQJ involved in histidine transport. Is also part of the ABC transporter complex HisPMQ-ArgT involved in lysine/arginine/ornithine transport. Probably responsible for the translocation of the substrate across the membrane. The chain is Histidine/lysine/arginine/ornithine transport system permease protein HisQ (hisQ) from Escherichia coli (strain K12).